The following is a 115-amino-acid chain: Large ribosomal subunit protein bL20c (115 aa).

It belongs to the bacterial ribosomal protein bL20 family.

The protein resides in the plastid. It is found in the organellar chromatophore. Binds directly to 23S ribosomal RNA and is necessary for the in vitro assembly process of the 50S ribosomal subunit. It is not involved in the protein synthesizing functions of that subunit. This Paulinella chromatophora protein is Large ribosomal subunit protein bL20c.